The chain runs to 143 residues: Transcriptional regulator MraZ (143 aa).

2 SpoVT-AbrB domains span residues 6 to 49 (TYNH…NEAE) and 78 to 121 (SDET…DLKV).

This sequence belongs to the MraZ family. In terms of assembly, forms oligomers.

It localises to the cytoplasm. The protein localises to the nucleoid. The polypeptide is Transcriptional regulator MraZ (Spiroplasma kunkelii).